Here is a 719-residue protein sequence, read N- to C-terminus: Pesticidal crystal protein Cry1Ic (719 aa).

This sequence belongs to the delta endotoxin family.

Functionally, promotes colloidosmotic lysis by binding to the midgut epithelial cells of insects. This Bacillus thuringiensis protein is Pesticidal crystal protein Cry1Ic (cry1Ic).